The chain runs to 190 residues: Endoribonuclease YbeY (190 aa).

Residues 1–20 (MDVENDRPPRRGAAGERNSG) are disordered. Zn(2+) contacts are provided by H147, H151, and H157.

The protein belongs to the endoribonuclease YbeY family. Zn(2+) serves as cofactor.

Its subcellular location is the cytoplasm. Single strand-specific metallo-endoribonuclease involved in late-stage 70S ribosome quality control and in maturation of the 3' terminus of the 16S rRNA. This Nitrobacter hamburgensis (strain DSM 10229 / NCIMB 13809 / X14) protein is Endoribonuclease YbeY.